The chain runs to 1041 residues: Cullin-associated NEDD8-dissociated protein 1, C-terminal part (1041 aa).

Disordered stretches follow at residues 1–24 (MSSD…ELRE) and 64–103 (DMGE…EGGY). Residues 9–24 (YSHDDEHDPQTDELRE) are compositionally biased toward basic and acidic residues. The span at 65 to 103 (MGEDEEMSGTQDDGSEDDVTEEPDLEDDDFEDFEEEGGY) shows a compositional bias: acidic residues. An HEAT 1 repeat occupies 138–176 (SLYQQIAPAIVARFNKEREESVKLELVSTMDALVRKTAE). The interval 189 to 237 (SVGSGSKISRKRRRQDSDASMIDFEPSMGTSSAAGTPLAAPSSPQSGPQ) is disordered. A compositionally biased stretch (low complexity) spans 225–237 (PLAAPSSPQSGPQ). HEAT repeat units follow at residues 242–279 (NALP…VRYG), 339–376 (PFLI…ALTP), 434–472 (LSFE…LCSR), 479–516 (NWVR…NPNT), 525–560 (MKNL…GNAQ), 598–637 (GSGL…NVGV), 670–708 (GASC…GNVK), 710–744 (YLPT…MVRR), 780–817 (LDPP…DSRD), and 822–867 (VLRP…HLGE).

The protein belongs to the CAND family. In terms of assembly, interacts with candA-N. Interacts with unneddylated cullins culA and culD.

The protein localises to the nucleus. In terms of biological role, assembly factor of SCF (SKP1-CUL1-F-box protein) E3 ubiquitin ligase complexes that promotes the exchange of the substrate-recognition F-box subunit in SCF complexes, thereby playing a key role in the cellular repertoire of SCF complexes. Acts as a F-box protein exchange factor when interacting with candA-N. This Emericella nidulans (strain FGSC A4 / ATCC 38163 / CBS 112.46 / NRRL 194 / M139) (Aspergillus nidulans) protein is Cullin-associated NEDD8-dissociated protein 1, C-terminal part (candA-C).